Here is a 530-residue protein sequence, read N- to C-terminus: UDP-glucuronosyltransferase 2B17 (530 aa).

The N-terminal stretch at methionine 1 to cysteine 23 is a signal peptide. A helical transmembrane segment spans residues valine 494 to valine 510.

Belongs to the UDP-glycosyltransferase family.

It is found in the endoplasmic reticulum membrane. The enzyme catalyses glucuronate acceptor + UDP-alpha-D-glucuronate = acceptor beta-D-glucuronoside + UDP + H(+). The catalysed reaction is 17alpha-estradiol + UDP-alpha-D-glucuronate = 17alpha-estradiol 3-O-(beta-D-glucuronate) + UDP + H(+). It carries out the reaction 17alpha-estradiol + UDP-alpha-D-glucuronate = 17alpha-estradiol 17-O-(beta-D-glucuronate) + UDP + H(+). It catalyses the reaction 17beta-estradiol + UDP-alpha-D-glucuronate = 17beta-estradiol 17-O-(beta-D-glucuronate) + UDP + H(+). The enzyme catalyses 17beta-hydroxy-5alpha-androstan-3-one + UDP-alpha-D-glucuronate = 5alpha-dihydrotestosterone 17-O-(beta-D-glucuronate) + UDP + H(+). The catalysed reaction is testosterone + UDP-alpha-D-glucuronate = testosterone 17-O-(beta-D-glucuronate) + UDP + H(+). Its function is as follows. UDP-glucuronosyltransferase (UGT) that catalyzes phase II biotransformation reactions in which lipophilic substrates are conjugated with glucuronic acid to increase the metabolite's water solubility, thereby facilitating excretion into either the urine or bile. Catalyzes the glucuronidation of endogenous steroid hormones such as androgens (epitestosterone, androsterone) and estrogens (estradiol, epiestradiol). The polypeptide is UDP-glucuronosyltransferase 2B17 (Rattus norvegicus (Rat)).